We begin with the raw amino-acid sequence, 272 residues long: Phosphoglycolate phosphatase (272 aa).

The active-site Nucleophile is Asp-19. Residues Asp-19, Asp-21, and Asp-182 each coordinate Mg(2+).

This sequence belongs to the HAD-like hydrolase superfamily. CbbY/CbbZ/Gph/YieH family. Mg(2+) is required as a cofactor.

The catalysed reaction is 2-phosphoglycolate + H2O = glycolate + phosphate. The protein operates within organic acid metabolism; glycolate biosynthesis; glycolate from 2-phosphoglycolate: step 1/1. Specifically catalyzes the dephosphorylation of 2-phosphoglycolate. Is involved in the dissimilation of the intracellular 2-phosphoglycolate formed during the DNA repair of 3'-phosphoglycolate ends, a major class of DNA lesions induced by oxidative stress. The protein is Phosphoglycolate phosphatase of Pseudomonas savastanoi pv. phaseolicola (strain 1448A / Race 6) (Pseudomonas syringae pv. phaseolicola (strain 1448A / Race 6)).